We begin with the raw amino-acid sequence, 813 residues long: Homeobox-leucine zipper protein ROC4 (813 aa).

Residues 62–112 form a disordered region; it reads EVENEMSRSGSDHLDVVSCGDAGGGGGDDDDDEDAEHGNPPKRKKRYHRHT. A compositionally biased stretch (basic residues) spans 101 to 112; it reads PPKRKKRYHRHT. A DNA-binding region (homeobox) is located at residues 104-163; it reads RKKRYHRHTPQQIQELEAMFKECPHPDEKQRAELSKRLGLEPRQVKFWFQNRRTQMKMQL. The stretch at 152-191 forms a coiled coil; that stretch reads FQNRRTQMKMQLERHENSLLKQENDKLRSENLSIREATSN. One can recognise an START domain in the interval 306–559; sequence AGIDKSLFLE…LQRQCECLAL (254 aa).

The protein belongs to the HD-ZIP homeobox family. Class IV subfamily.

It is found in the nucleus. In terms of biological role, probable transcription factor. This is Homeobox-leucine zipper protein ROC4 (ROC4) from Oryza sativa subsp. japonica (Rice).